A 138-amino-acid polypeptide reads, in one-letter code: MVMTVRVIAPDKTVWDAPAEEVILPSTTGQLGILSNHAPLLTALETGVMRVRQDREWVAIALMGGFAEVENNEVTILVNGAERGDTIDLEKAKAEFAAAQAALAQAEQGESKQAKIQATQAFRRARARLQAAGGVVEI.

It belongs to the ATPase epsilon chain family. F-type ATPases have 2 components, CF(1) - the catalytic core - and CF(0) - the membrane proton channel. CF(1) has five subunits: alpha(3), beta(3), gamma(1), delta(1), epsilon(1). CF(0) has four main subunits: a(1), b(1), b'(1) and c(9-12).

It is found in the cellular thylakoid membrane. Functionally, produces ATP from ADP in the presence of a proton gradient across the membrane. The complex from the organism is particularly stable to disruption and remains functional after 6 hours at 55 degrees Celsius. This is ATP synthase epsilon chain from Thermosynechococcus vestitus (strain NIES-2133 / IAM M-273 / BP-1).